We begin with the raw amino-acid sequence, 438 residues long: Putative hydroxypyruvate reductase (438 aa).

The enzyme catalyses (R)-glycerate + NAD(+) = 3-hydroxypyruvate + NADH + H(+). The catalysed reaction is (R)-glycerate + NADP(+) = 3-hydroxypyruvate + NADPH + H(+). It functions in the pathway carbohydrate acid metabolism; tartrate degradation; 3-hydroxypyruvate from D-glycerate: step 1/1. Functionally, degrades an unidentified toxic product from the first step of tartrate degradation. The protein is Putative hydroxypyruvate reductase (ttuD) of Agrobacterium vitis (Rhizobium vitis).